A 129-amino-acid polypeptide reads, in one-letter code: Transcription antitermination protein NusB (129 aa).

It belongs to the NusB family.

Functionally, involved in transcription antitermination. Required for transcription of ribosomal RNA (rRNA) genes. Binds specifically to the boxA antiterminator sequence of the ribosomal RNA (rrn) operons. This chain is Transcription antitermination protein NusB, found in Staphylococcus epidermidis (strain ATCC 35984 / DSM 28319 / BCRC 17069 / CCUG 31568 / BM 3577 / RP62A).